The following is a 443-amino-acid chain: Putative transporter AmpG 1 (443 aa).

The next 13 membrane-spanning stretches (helical) occupy residues 5-25 (SHIY…MITG), 42-62 (IGML…APVF), 78-98 (LSWI…LSFL), 104-124 (LVLL…QDTI), 143-163 (GIYI…AIYL), 171-191 (AIYK…ILVA), 230-250 (FNYF…GFYF), 254-274 (DINL…YRLP), 299-319 (VCKF…GIIM), 324-344 (ILYS…FFIL), 354-374 (ILFI…TAYI), 393-413 (LSSM…YMVV), and 415-435 (FGWQ…LLIL).

Belongs to the major facilitator superfamily.

It is found in the cell inner membrane. The polypeptide is Putative transporter AmpG 1 (ampG1) (Rickettsia prowazekii (strain Madrid E)).